Here is a 307-residue protein sequence, read N- to C-terminus: 4-hydroxy-3-methylbut-2-enyl diphosphate reductase (307 aa).

Cys-13 is a binding site for [4Fe-4S] cluster. 2 residues coordinate (2E)-4-hydroxy-3-methylbut-2-enyl diphosphate: His-42 and His-75. Positions 42 and 75 each coordinate dimethylallyl diphosphate. Isopentenyl diphosphate-binding residues include His-42 and His-75. Cys-97 serves as a coordination point for [4Fe-4S] cluster. His-125 serves as a coordination point for (2E)-4-hydroxy-3-methylbut-2-enyl diphosphate. A dimethylallyl diphosphate-binding site is contributed by His-125. His-125 is a binding site for isopentenyl diphosphate. The active-site Proton donor is Glu-127. Position 165 (Thr-165) interacts with (2E)-4-hydroxy-3-methylbut-2-enyl diphosphate. Cys-195 provides a ligand contact to [4Fe-4S] cluster. Residues Ser-223, Ser-224, Asn-225, and Ser-267 each coordinate (2E)-4-hydroxy-3-methylbut-2-enyl diphosphate. Residues Ser-223, Ser-224, Asn-225, and Ser-267 each coordinate dimethylallyl diphosphate. Residues Ser-223, Ser-224, Asn-225, and Ser-267 each coordinate isopentenyl diphosphate.

The protein belongs to the IspH family. Requires [4Fe-4S] cluster as cofactor.

The enzyme catalyses isopentenyl diphosphate + 2 oxidized [2Fe-2S]-[ferredoxin] + H2O = (2E)-4-hydroxy-3-methylbut-2-enyl diphosphate + 2 reduced [2Fe-2S]-[ferredoxin] + 2 H(+). It carries out the reaction dimethylallyl diphosphate + 2 oxidized [2Fe-2S]-[ferredoxin] + H2O = (2E)-4-hydroxy-3-methylbut-2-enyl diphosphate + 2 reduced [2Fe-2S]-[ferredoxin] + 2 H(+). The protein operates within isoprenoid biosynthesis; dimethylallyl diphosphate biosynthesis; dimethylallyl diphosphate from (2E)-4-hydroxy-3-methylbutenyl diphosphate: step 1/1. It functions in the pathway isoprenoid biosynthesis; isopentenyl diphosphate biosynthesis via DXP pathway; isopentenyl diphosphate from 1-deoxy-D-xylulose 5-phosphate: step 6/6. In terms of biological role, catalyzes the conversion of 1-hydroxy-2-methyl-2-(E)-butenyl 4-diphosphate (HMBPP) into a mixture of isopentenyl diphosphate (IPP) and dimethylallyl diphosphate (DMAPP). Acts in the terminal step of the DOXP/MEP pathway for isoprenoid precursor biosynthesis. The polypeptide is 4-hydroxy-3-methylbut-2-enyl diphosphate reductase (Chlamydia trachomatis serovar L2 (strain ATCC VR-902B / DSM 19102 / 434/Bu)).